The following is an 85-amino-acid chain: MKTDIHPKYAPVVFRDLASGATFLTRSTVSSSKTIEWEDGNTYAVIDVEISSESHPFYTGKQRIMDSAGRVEKFNSRYAGFGTKK.

The protein belongs to the bacterial ribosomal protein bL31 family. Type B subfamily. As to quaternary structure, part of the 50S ribosomal subunit.

This is Large ribosomal subunit protein bL31B from Clavibacter michiganensis subsp. michiganensis (strain NCPPB 382).